Reading from the N-terminus, the 365-residue chain is Class I histocompatibility antigen, Gogo-A*0501 alpha chain (365 aa).

Residues 1 to 24 form the signal peptide; it reads MAVVAPRTLLLLLSGALALTQTWA. The interval 25–114 is alpha-1; that stretch reads GSHSMRYFST…ALRYYNQSED (90 aa). Residues 25–308 are Extracellular-facing; it reads GSHSMRYFST…EPSSQPTIPI (284 aa). An N-linked (GlcNAc...) asparagine glycan is attached at N110. An alpha-2 region spans residues 115–206; sequence GSHTIQRMYG…ENGKETLQRT (92 aa). 2 disulfides stabilise this stretch: C125–C188 and C227–C283. Residues 207–298 are alpha-3; sequence DAPKTHTTHQ…GLPKPLTLRW (92 aa). The 87-residue stretch at 209-295 folds into the Ig-like C1-type domain; that stretch reads PKTHTTHQAV…QHEGLPKPLT (87 aa). A connecting peptide region spans residues 299–308; the sequence is EPSSQPTIPI. The chain crosses the membrane as a helical span at residues 309 to 332; it reads VGIIAGLVLFGAVIAGAVVAAVRW. Residues 333–365 lie on the Cytoplasmic side of the membrane; the sequence is RRKSSDRKGGSYSQAASSDSAQGSDVSLTACKV. Residues 338–365 are disordered; it reads DRKGGSYSQAASSDSAQGSDVSLTACKV. Positions 342 to 359 are enriched in low complexity; sequence GSYSQAASSDSAQGSDVS. The residue at position 343 (S343) is a Phosphoserine. Position 344 is a phosphotyrosine (Y344). Residues S345, S349, S352, S356, and S359 each carry the phosphoserine modification.

The protein belongs to the MHC class I family. Heterodimer of an alpha chain and a beta chain (beta-2-microglobulin).

It is found in the membrane. Involved in the presentation of foreign antigens to the immune system. The sequence is that of Class I histocompatibility antigen, Gogo-A*0501 alpha chain from Gorilla gorilla gorilla (Western lowland gorilla).